Here is a 569-residue protein sequence, read N- to C-terminus: Archaeosine synthase (569 aa).

A PUA domain is found at serine 495–serine 569.

Belongs to the archaeosine synthase type 1 family. As to quaternary structure, homodimer.

It catalyses the reaction 7-cyano-7-carbaguanosine(15) in tRNA + L-glutamine + H2O = archaeosine(15) in tRNA + L-glutamate. Its pathway is tRNA modification; archaeosine-tRNA biosynthesis. Its function is as follows. Is responsible for the final step in the biosynthesis of archaeosine, a modified nucleoside present in the dihydrouridine loop (D-loop) of archaeal tRNA. Catalyzes the conversion of 7-cyano-7-deazaguanine (preQ0)-modified tRNA to archaeosine-tRNA, transforming a nitrile group to a formamidine group. Can use either glutamine, asparagine or ammonium as amino donor. The chain is Archaeosine synthase from Methanocaldococcus jannaschii (strain ATCC 43067 / DSM 2661 / JAL-1 / JCM 10045 / NBRC 100440) (Methanococcus jannaschii).